Here is an 83-residue protein sequence, read N- to C-terminus: Exodeoxyribonuclease 7 small subunit (83 aa).

The protein belongs to the XseB family. Heterooligomer composed of large and small subunits.

It is found in the cytoplasm. The catalysed reaction is Exonucleolytic cleavage in either 5'- to 3'- or 3'- to 5'-direction to yield nucleoside 5'-phosphates.. In terms of biological role, bidirectionally degrades single-stranded DNA into large acid-insoluble oligonucleotides, which are then degraded further into small acid-soluble oligonucleotides. This is Exodeoxyribonuclease 7 small subunit from Mesorhizobium japonicum (strain LMG 29417 / CECT 9101 / MAFF 303099) (Mesorhizobium loti (strain MAFF 303099)).